A 97-amino-acid polypeptide reads, in one-letter code: Putative membrane protein insertion efficiency factor (97 aa).

Belongs to the UPF0161 family.

Its subcellular location is the cell inner membrane. Its function is as follows. Could be involved in insertion of integral membrane proteins into the membrane. The protein is Putative membrane protein insertion efficiency factor of Chlamydia muridarum (strain MoPn / Nigg).